Reading from the N-terminus, the 1377-residue chain is Neogenin (1377 aa).

Residues Ala1–Ala2 form the signal peptide. At Ala3–Leu1074 the chain is on the extracellular side. Ig-like C2-type domains are found at residues Pro21 to Lys114, Pro121 to Leu206, Pro198 to Thr305, and Pro310 to Ile395. Asn42 carries an N-linked (GlcNAc...) asparagine glycan. Cystine bridges form between Cys43–Cys98, Cys142–Cys190, and Cys239–Cys289. A glycan (N-linked (GlcNAc...) asparagine) is linked at Asn179. A glycan (N-linked (GlcNAc...) asparagine) is linked at Asn295. A disulfide bond links Cys331 and Cys379. 6 Fibronectin type-III domains span residues Ala410–Glu504, Pro510–Asp600, Ala605–Ser700, Val710–Thr800, Pro825–Thr924, and Pro926–Ala1023. 2 N-linked (GlcNAc...) asparagine glycosylation sites follow: Asn439 and Asn458. N-linked (GlcNAc...) asparagine glycans are attached at residues Asn608 and Asn684. An N-linked (GlcNAc...) asparagine glycan is attached at Asn878. A disordered region spans residues Gly1010–Thr1066. The segment covering Pro1021–Pro1030 has biased composition (basic and acidic residues). Polar residues predominate over residues Ser1056–Thr1066. A helical transmembrane segment spans residues Leu1075–Phe1095. The Cytoplasmic portion of the chain corresponds to Cys1096–Ala1377. The disordered stretch occupies residues Pro1143–Pro1281. Phosphoserine is present on residues Ser1147 and Ser1163. 3 stretches are compositionally biased toward polar residues: residues Pro1160–Asn1176, Gln1213–Thr1238, and Ala1246–Pro1265. Thr1167 carries the post-translational modification Phosphothreonine. Ser1317 is subject to Phosphoserine. Thr1320 bears the Phosphothreonine mark. Phosphoserine occurs at positions 1348, 1350, and 1351.

This sequence belongs to the immunoglobulin superfamily. DCC family. As to quaternary structure, interacts with MYO10. Interacts with RGMA and RGMB. Interacts with BMP2, BMP4, BMP6, and BMP7.

The protein resides in the cell membrane. Functionally, multi-functional cell surface receptor regulating cell adhesion in many diverse developmental processes, including neural tube and mammary gland formation, myogenesis and angiogenesis. Receptor for members of the BMP, netrin, and repulsive guidance molecule (RGM) families. Netrin-Neogenin interactions result in a chemoattractive axon guidance response and cell-cell adhesion, the interaction between NEO1/Neogenin and RGMa and RGMb induces a chemorepulsive response. The sequence is that of Neogenin (Neo1) from Rattus norvegicus (Rat).